The chain runs to 284 residues: NAD kinase (284 aa).

The active-site Proton acceptor is the aspartate 70. NAD(+)-binding positions include aspartate 70 to glycine 71, asparagine 139 to glutamate 140, lysine 167, aspartate 169, leucine 177, threonine 180 to serine 185, and glutamine 236.

It belongs to the NAD kinase family. It depends on a divalent metal cation as a cofactor.

It is found in the cytoplasm. The catalysed reaction is NAD(+) + ATP = ADP + NADP(+) + H(+). Its function is as follows. Involved in the regulation of the intracellular balance of NAD and NADP, and is a key enzyme in the biosynthesis of NADP. Catalyzes specifically the phosphorylation on 2'-hydroxyl of the adenosine moiety of NAD to yield NADP. This is NAD kinase from Helicobacter pylori (strain HPAG1).